The sequence spans 599 residues: Adenine deaminase (599 aa).

This sequence belongs to the metallo-dependent hydrolases superfamily. Adenine deaminase family. The cofactor is Mn(2+).

It carries out the reaction adenine + H2O + H(+) = hypoxanthine + NH4(+). This is Adenine deaminase from Clostridium botulinum (strain Langeland / NCTC 10281 / Type F).